The following is a 176-amino-acid chain: Pituitary adenylate cyclase-activating polypeptide (176 aa).

The N-terminal stretch at 1-24 (MTMCSGARLALLVYGIIMHSSVYC) is a signal peptide. The propeptide occupies 25–80 (SPAAAGLRFPGIRPEDEAYDEDGNPLQDFYDSDPPGVGGPASTLRDAYALYYPAEE). Residues 150-158 (VKKYLAAVL) form an important for receptor binding region. Leu-158 is subject to Leucine amide. At Lys-169 the chain carries Lysine amide. Residues 173–176 (IAYL) constitute a propeptide that is removed on maturation.

The protein belongs to the glucagon family.

Its subcellular location is the secreted. Functionally, PACAP is a neuropeptide involved in diverse array of physiological processes through activating the PACAP subfamily of class B1 G protein-coupled receptors: VIP receptor 1 (VIPR1), VIP receptor 2 (VIPR2), and PACAP type I receptor (ADCYAP1R1). Exerts neuroprotective and general cytoprotective effects due to anti-apoptotic, anti-inflammatory, and antioxidant actions. Promotes neuron projection development through the RAPGEF2/Rap1/B-Raf/ERK pathway. In chromaffin cells, induces long-lasting increase of intracellular calcium concentrations and neuroendocrine secretion. Involved in the control of glucose homeostasis, induces insulin secretion by pancreatic beta cells. PACAP exists in two bioactive forms from proteolysis of the same precursor protein, PACAP27 and PACAP38, which differ by eleven amino acid residues in the C-terminus. The chain is Pituitary adenylate cyclase-activating polypeptide (ADCYAP1) from Sus scrofa (Pig).